The primary structure comprises 195 residues: Ribosomal RNA small subunit methyltransferase G (195 aa).

Residues Gly-60, Leu-65, 114-115, and Arg-128 contribute to the S-adenosyl-L-methionine site; that span reads IE.

Belongs to the methyltransferase superfamily. RNA methyltransferase RsmG family.

It localises to the cytoplasm. It catalyses the reaction guanosine(527) in 16S rRNA + S-adenosyl-L-methionine = N(7)-methylguanosine(527) in 16S rRNA + S-adenosyl-L-homocysteine. Specifically methylates the N7 position of guanine in position 527 of 16S rRNA. This chain is Ribosomal RNA small subunit methyltransferase G, found in Dinoroseobacter shibae (strain DSM 16493 / NCIMB 14021 / DFL 12).